The sequence spans 109 residues: uncharacterized protein (109 aa).

Positions 27–89 form a coiled coil; it reads KEEAHQFRDK…LKRIDELIAV (63 aa).

This is an uncharacterized protein from Streptococcus pneumoniae.